Reading from the N-terminus, the 1351-residue chain is Transcriptional regulator ovo (1351 aa).

A required for Ubr3 binding and tal-dependent proteolytic processing region spans residues 1 to 31 (MPKIFLIKNRLHQQQQRLLESQNLLQHKNQD). 10 disordered regions span residues 22 to 77 (QNLL…SDQQ), 100 to 119 (LDHL…NPNQ), 184 to 397 (NSPI…SDEE), 447 to 554 (AGHG…HFNA), 640 to 665 (SNSK…GQTS), 778 to 807 (DDEE…PVEQ), 834 to 887 (GSNQ…YQHA), 916 to 1000 (LLSQ…PSPT), 1023 to 1044 (PMSS…GSSN), and 1113 to 1192 (SKHG…DSSS). The segment covering 49–60 (SPTPTSQPPPEP) has biased composition (pro residues). Composition is skewed to low complexity over residues 61–72 (QGQGQQVLGQVP) and 104–119 (NQNQ…NPNQ). Over residues 205-232 (EKEKPAEREREKSDERTEQVEKEERVER) the composition is skewed to basic and acidic residues. Positions 233-242 (EEEEDDEVDV) are enriched in acidic residues. The span at 262-272 (QRKEYPQEPKD) shows a compositional bias: basic and acidic residues. Residues 324 to 340 (TPPPADQRPSPPPPRDP) show a composition bias toward pro residues. The segment covering 447 to 486 (AGHGRNSSSSSGAAGQGFQSSGFGSQNSGSGSSSGNQNAG) has biased composition (low complexity). Positions 487–505 (SGAGSPGSGAGGGGGMGGG) are enriched in gly residues. The segment covering 530 to 552 (KSGQQSTASNNTGQSPGANHSHF) has biased composition (polar residues). The span at 644-653 (FHNHHHHHQH) shows a compositional bias: basic residues. Residues 793 to 807 (STPSLTPDSVTPVEQ) are compositionally biased toward polar residues. 5 stretches are compositionally biased toward low complexity: residues 835–878 (SNQQ…HVQQ), 916–962 (LLSQ…QQQQ), 970–979 (QQQQQPQPQS), 1025–1044 (SSSS…GSSN), and 1121–1175 (HQQQ…HGSA). 4 C2H2-type zinc fingers span residues 1197-1219 (FVCR…MKCH), 1225-1247 (YLCT…TRTH), 1253-1276 (YKCN…QKVH), and 1292-1315 (YVCE…KNNH).

Interacts (via N-terminus) with Ubr3; the interaction is mediated by tal. Post-translationally, N-terminus is proteolytically cleaved and ubiquitinated via a tal-dependent mechanism, leading to the proteolytic degradation of the N-terminus and the production of transcriptional activator shavenbaby, a truncated form with transcriptional activator activity.

Its subcellular location is the cytoplasm. It localises to the nucleus. It is found in the nucleoplasm. Transcriptional regulator with essential functions in the germline and soma. Plays an essential role in regulating the formation of apical cell extensions such as denticles and aristae, and initiating cytoskeletal remodeling during epidermal differentiation. Functionally, transcriptional repressor which functions in postembryonic development. The full-length unprocessed form acts as a transcriptional repressor (Transcriptional repressor svb). In terms of biological role, transcriptional activator which initiates trichome development and also promotes tarsal joint development. Has an essential somatic role regulating the tal-dependent formation of trichomes, and initiating cytoskeletal remodeling during epidermal differentiation. Function with SoxN is required for correct denticle morphogenesis on the embryonic epidermis. SoxN and svb appear to act both independently and in conjunction with each other to activate certain genes involved in denticle morphogenesis; Svb appears to be involved in regulating denticle length whereas SoxN regulates the denticle base circumference. Also functions in the development of other apical cell extensions such as bristles. Also has an important role in tarsal joint development, repressing expression of the N ligand Dl and defining its signaling boundary. Its function is as follows. Transcriptional repressor which is specifically involved in female germline development, where it functions antagonistically to isoform D. Negatively regulates expression of otu and may also have autoregulatory activity. Negatively regulates expression of piwi in the primordial germ cells (PGCs). Transcriptional activator which is specifically involved in female germline development, where it functions antagonistically to isoform C. Necessary and sufficient for normal oogenesis. Required in the primordial germ cells (PGCs) for normal development of male and female germline cells. Plays a role in germline sex determination. Binds the promoter DNA and positively regulates the transcription of the otu gene in a stage-specific manner. May have autoregulatory activity. This is Transcriptional regulator ovo from Drosophila melanogaster (Fruit fly).